A 412-amino-acid chain; its full sequence is Multifunctional CCA protein (412 aa).

Gly-8 and Arg-11 together coordinate ATP. The CTP site is built by Gly-8 and Arg-11. Positions 21 and 23 each coordinate Mg(2+). ATP contacts are provided by Arg-91, Arg-137, and Arg-140. CTP contacts are provided by Arg-91, Arg-137, and Arg-140. In terms of domain architecture, HD spans Thr-228 to Trp-329.

It belongs to the tRNA nucleotidyltransferase/poly(A) polymerase family. Bacterial CCA-adding enzyme type 1 subfamily. Monomer. Can also form homodimers and oligomers. Mg(2+) serves as cofactor. It depends on Ni(2+) as a cofactor.

It carries out the reaction a tRNA precursor + 2 CTP + ATP = a tRNA with a 3' CCA end + 3 diphosphate. It catalyses the reaction a tRNA with a 3' CCA end + 2 CTP + ATP = a tRNA with a 3' CCACCA end + 3 diphosphate. Its function is as follows. Catalyzes the addition and repair of the essential 3'-terminal CCA sequence in tRNAs without using a nucleic acid template. Adds these three nucleotides in the order of C, C, and A to the tRNA nucleotide-73, using CTP and ATP as substrates and producing inorganic pyrophosphate. tRNA 3'-terminal CCA addition is required both for tRNA processing and repair. Also involved in tRNA surveillance by mediating tandem CCA addition to generate a CCACCA at the 3' terminus of unstable tRNAs. While stable tRNAs receive only 3'-terminal CCA, unstable tRNAs are marked with CCACCA and rapidly degraded. The polypeptide is Multifunctional CCA protein (Escherichia coli O127:H6 (strain E2348/69 / EPEC)).